The sequence spans 258 residues: D-aminoacyl-tRNA deacylase (258 aa).

Belongs to the DtdA deacylase family. In terms of assembly, monomer. The cofactor is Zn(2+).

It catalyses the reaction a D-aminoacyl-tRNA + H2O = a tRNA + a D-alpha-amino acid + H(+). The catalysed reaction is glycyl-tRNA(Ala) + H2O = tRNA(Ala) + glycine + H(+). Functionally, D-aminoacyl-tRNA deacylase with broad substrate specificity. By recycling D-aminoacyl-tRNA to D-amino acids and free tRNA molecules, this enzyme counteracts the toxicity associated with the formation of D-aminoacyl-tRNA entities in vivo. The sequence is that of D-aminoacyl-tRNA deacylase from Cenarchaeum symbiosum (strain A).